The following is a 185-amino-acid chain: Dual specificity protein phosphatase 3 (185 aa).

Residues 28-179 (QPCNEVTPRI…LCQLNDRLAK (152 aa)) form the Tyrosine-protein phosphatase domain. Cys-124 acts as the Phosphocysteine intermediate in catalysis.

Belongs to the protein-tyrosine phosphatase family. Non-receptor class dual specificity subfamily. As to quaternary structure, microtubule inner protein component of sperm flagellar doublet microtubules. Interacts with VRK3; this interaction activates DUSP3 phosphatase activity.

The protein resides in the nucleus. It is found in the cytoplasm. The protein localises to the cytoskeleton. It localises to the flagellum axoneme. It carries out the reaction O-phospho-L-tyrosyl-[protein] + H2O = L-tyrosyl-[protein] + phosphate. The enzyme catalyses O-phospho-L-seryl-[protein] + H2O = L-seryl-[protein] + phosphate. The catalysed reaction is O-phospho-L-threonyl-[protein] + H2O = L-threonyl-[protein] + phosphate. Functionally, shows activity both for tyrosine-protein phosphate and serine-protein phosphate, but displays a strong preference toward phosphotyrosines. Specifically dephosphorylates and inactivates ERK1 and ERK2. In Homo sapiens (Human), this protein is Dual specificity protein phosphatase 3 (DUSP3).